The chain runs to 603 residues: Sorting nexin-41 (603 aa).

The disordered stretch occupies residues 1–36; it reads MNSFRESDEEDNNPFSGTNHLYASGIGAVPEGDDDF. The 121-residue stretch at 121–241 folds into the PX domain; it reads AEGSLGALRI…QKFLNPEYIW (121 aa). The a 1,2-diacyl-sn-glycero-3-phospho-(1D-myo-inositol-3-phosphate) site is built by R159, S161, K185, and R208.

It belongs to the sorting nexin family.

The protein resides in the endosome membrane. Its subcellular location is the endomembrane system. May be required for cytoplasm to vacuole transport (Cvt) and pexophagy. The chain is Sorting nexin-41 (SNX41) from Eremothecium gossypii (strain ATCC 10895 / CBS 109.51 / FGSC 9923 / NRRL Y-1056) (Yeast).